The sequence spans 156 residues: Small ribosomal subunit protein uS7 (156 aa).

It belongs to the universal ribosomal protein uS7 family. As to quaternary structure, part of the 30S ribosomal subunit. Contacts proteins S9 and S11.

Its function is as follows. One of the primary rRNA binding proteins, it binds directly to 16S rRNA where it nucleates assembly of the head domain of the 30S subunit. Is located at the subunit interface close to the decoding center, probably blocks exit of the E-site tRNA. This is Small ribosomal subunit protein uS7 from Brucella abortus (strain S19).